A 218-amino-acid chain; its full sequence is Pyridoxine/pyridoxamine 5'-phosphate oxidase (218 aa).

Substrate is bound by residues R12–Y15 and R70. Residues R65 to R70, Y80 to T81, K87, and Q109 each bind FMN. Substrate contacts are provided by Y127, R131, and S135. FMN contacts are provided by residues Q145–S146 and W191. R197 to H199 is a binding site for substrate. Residue R201 coordinates FMN.

Belongs to the pyridoxamine 5'-phosphate oxidase family. Homodimer. FMN serves as cofactor.

The catalysed reaction is pyridoxamine 5'-phosphate + O2 + H2O = pyridoxal 5'-phosphate + H2O2 + NH4(+). The enzyme catalyses pyridoxine 5'-phosphate + O2 = pyridoxal 5'-phosphate + H2O2. The protein operates within cofactor metabolism; pyridoxal 5'-phosphate salvage; pyridoxal 5'-phosphate from pyridoxamine 5'-phosphate: step 1/1. Its pathway is cofactor metabolism; pyridoxal 5'-phosphate salvage; pyridoxal 5'-phosphate from pyridoxine 5'-phosphate: step 1/1. Its function is as follows. Catalyzes the oxidation of either pyridoxine 5'-phosphate (PNP) or pyridoxamine 5'-phosphate (PMP) into pyridoxal 5'-phosphate (PLP). The chain is Pyridoxine/pyridoxamine 5'-phosphate oxidase from Acinetobacter baumannii (strain AB0057).